Consider the following 272-residue polypeptide: 3-methyl-2-oxobutanoate hydroxymethyltransferase (272 aa).

Mg(2+) contacts are provided by Asp52 and Asp91. 3-methyl-2-oxobutanoate is bound by residues 52-53 (DS), Asp91, and Lys121. Glu123 is a Mg(2+) binding site. The active-site Proton acceptor is the Glu190.

This sequence belongs to the PanB family. As to quaternary structure, homodecamer; pentamer of dimers. Mg(2+) serves as cofactor.

Its subcellular location is the cytoplasm. The catalysed reaction is 3-methyl-2-oxobutanoate + (6R)-5,10-methylene-5,6,7,8-tetrahydrofolate + H2O = 2-dehydropantoate + (6S)-5,6,7,8-tetrahydrofolate. It functions in the pathway cofactor biosynthesis; (R)-pantothenate biosynthesis; (R)-pantoate from 3-methyl-2-oxobutanoate: step 1/2. Its function is as follows. Catalyzes the reversible reaction in which hydroxymethyl group from 5,10-methylenetetrahydrofolate is transferred onto alpha-ketoisovalerate to form ketopantoate. The polypeptide is 3-methyl-2-oxobutanoate hydroxymethyltransferase (Cytophaga hutchinsonii (strain ATCC 33406 / DSM 1761 / CIP 103989 / NBRC 15051 / NCIMB 9469 / D465)).